A 217-amino-acid chain; its full sequence is Dihydroflavonol 4-reductase (217 aa).

NADP(+) is bound by residues K27 and Y146.

It belongs to the NAD(P)-dependent epimerase/dehydratase family. Dihydroflavonol-4-reductase subfamily.

The catalysed reaction is a (2R,3S,4S)-leucoanthocyanidin + NADP(+) = a (2R,3R)-dihydroflavonol + NADPH + H(+). It carries out the reaction (2S)-flavan-4-ol + NADP(+) = (2S)-flavanone + NADPH + H(+). Its pathway is pigment biosynthesis; anthocyanin biosynthesis. Functionally, bifunctional enzyme involved in flavonoid metabolism. In Medicago sativa (Alfalfa), this protein is Dihydroflavonol 4-reductase (DFR1).